Reading from the N-terminus, the 222-residue chain is Cell division protein FtsQ (222 aa).

Residues 1–5 (MNKKV) are Cytoplasmic-facing. Residues 6-26 (IAIVVGVVVVLVAILGVVAWF) traverse the membrane as a helical segment. The Extracellular segment spans residues 27–222 (VPILKVGNIE…ISSPSMVTVR (196 aa)). In terms of domain architecture, POTRA spans 30–98 (LKVGNIEVTG…STITVELTER (69 aa)).

The protein belongs to the FtsQ/DivIB family. FtsQ subfamily.

It is found in the cell membrane. Its function is as follows. Essential cell division protein. In Corynebacterium glutamicum (strain ATCC 13032 / DSM 20300 / JCM 1318 / BCRC 11384 / CCUG 27702 / LMG 3730 / NBRC 12168 / NCIMB 10025 / NRRL B-2784 / 534), this protein is Cell division protein FtsQ.